A 99-amino-acid polypeptide reads, in one-letter code: Large ribosomal subunit protein uL23c (99 aa).

The protein belongs to the universal ribosomal protein uL23 family. As to quaternary structure, part of the 50S ribosomal subunit.

It is found in the plastid. It localises to the chloroplast. Its function is as follows. Binds to 23S rRNA. This chain is Large ribosomal subunit protein uL23c (rpl23), found in Emiliania huxleyi (Coccolithophore).